Consider the following 333-residue polypeptide: Diaminopimelate epimerase (333 aa).

Substrate-binding residues include Asn24 and Asn79. The active-site Proton donor is Cys88. Substrate contacts are provided by residues 89 to 90 (GN), Asn176, Asn210, and 228 to 229 (ER). The active-site Proton acceptor is the Cys237. Position 238–239 (238–239 (GT)) interacts with substrate.

It belongs to the diaminopimelate epimerase family. As to quaternary structure, homodimer.

It localises to the cytoplasm. It catalyses the reaction (2S,6S)-2,6-diaminopimelate = meso-2,6-diaminopimelate. It participates in amino-acid biosynthesis; L-lysine biosynthesis via DAP pathway; DL-2,6-diaminopimelate from LL-2,6-diaminopimelate: step 1/1. Functionally, catalyzes the stereoinversion of LL-2,6-diaminopimelate (L,L-DAP) to meso-diaminopimelate (meso-DAP), a precursor of L-lysine and an essential component of the bacterial peptidoglycan. The protein is Diaminopimelate epimerase of Clostridium acetobutylicum (strain ATCC 824 / DSM 792 / JCM 1419 / IAM 19013 / LMG 5710 / NBRC 13948 / NRRL B-527 / VKM B-1787 / 2291 / W).